Here is a 33-residue protein sequence, read N- to C-terminus: Brevinin-2 (33 aa).

C27 and C33 are oxidised to a cystine.

It belongs to the frog skin active peptide (FSAP) family. Brevinin subfamily. In terms of tissue distribution, expressed by the skin glands.

It is found in the secreted. Shows antibacterial activity against representative Gram-negative and Gram-positive bacterial species, and a very high hemolytic activity. This Pelophylax porosus brevipodus (Nagoya Daruma pond frog) protein is Brevinin-2.